Consider the following 401-residue polypeptide: Deacetoxyvindoline 4-hydroxylase (401 aa).

A Fe2OG dioxygenase domain is found at Cys242–Thr345. His268, Asp270, and His324 together coordinate Fe cation. Residue Arg334 participates in 2-oxoglutarate binding.

It belongs to the iron/ascorbate-dependent oxidoreductase family. As to quaternary structure, monomer. Fe cation is required as a cofactor. Requires L-ascorbate as cofactor. As to expression, highest levels in leaves, lower levels in stems and fruits. Not expressed in flowers and roots.

It is found in the cytoplasm. The protein localises to the nucleus. The enzyme catalyses deacetoxyvindoline + 2-oxoglutarate + O2 = 4-O-deacetylvindoline + succinate + CO2. It participates in alkaloid biosynthesis; vindoline biosynthesis. Functionally, catalyzes the C4-hydroxylation of desacetoxyvindoline. The polypeptide is Deacetoxyvindoline 4-hydroxylase (Catharanthus roseus (Madagascar periwinkle)).